The chain runs to 95 residues: Protein TusB (95 aa).

Belongs to the DsrH/TusB family. In terms of assembly, heterohexamer, formed by a dimer of trimers. The hexameric TusBCD complex contains 2 copies each of TusB, TusC and TusD. The TusBCD complex interacts with TusE.

It is found in the cytoplasm. In terms of biological role, part of a sulfur-relay system required for 2-thiolation of 5-methylaminomethyl-2-thiouridine (mnm(5)s(2)U) at tRNA wobble positions. The polypeptide is Protein TusB (Escherichia coli O45:K1 (strain S88 / ExPEC)).